The chain runs to 261 residues: Thiamine thiazole synthase (261 aa).

NAD(+) contacts are provided by residues Ser40, 59 to 60 (ER), Gly67, Val133, and 159 to 161 (HVD). Fe cation is bound by residues Asp161 and His176. Residues Ser179 and Met226 each contribute to the NAD(+) site. Residue Arg236 participates in glycine binding.

This sequence belongs to the THI4 family. Homooctamer; tetramer of dimers. Fe(2+) serves as cofactor.

It catalyses the reaction hydrogen sulfide + glycine + NAD(+) = ADP-5-ethyl-4-methylthiazole-2-carboxylate + nicotinamide + 3 H2O + H(+). It functions in the pathway cofactor biosynthesis; thiamine diphosphate biosynthesis. Its function is as follows. Involved in the biosynthesis of the thiazole moiety of thiamine. Catalyzes the conversion of NAD and glycine to adenosine diphosphate 5-(2-hydroxyethyl)-4-methylthiazole-2-carboxylate (ADT), an adenylated thiazole intermediate, using free sulfide as a source of sulfur. This chain is Thiamine thiazole synthase, found in Methanococcus vannielii (strain ATCC 35089 / DSM 1224 / JCM 13029 / OCM 148 / SB).